The primary structure comprises 1066 residues: Probable sucrose-phosphate synthase 4 (1066 aa).

Disordered regions lie at residues 132-166 (YAAA…GRMP) and 688-714 (PRHP…SLRD). The segment covering 143 to 162 (EGEKGENINESSSTHDESTR) has biased composition (basic and acidic residues).

The protein belongs to the glycosyltransferase 1 family. As to quaternary structure, homodimer or homotetramer. Expressed in germinating seeds.

It carries out the reaction beta-D-fructose 6-phosphate + UDP-alpha-D-glucose = sucrose 6(F)-phosphate + UDP + H(+). It functions in the pathway glycan biosynthesis; sucrose biosynthesis; sucrose from D-fructose 6-phosphate and UDP-alpha-D-glucose: step 1/2. Activity is regulated by phosphorylation and moderated by concentration of metabolites and light. Plays a role in photosynthetic sucrose synthesis by catalyzing the rate-limiting step of sucrose biosynthesis from UDP-glucose and fructose- 6-phosphate. Involved in the regulation of carbon partitioning in the leaves of plants. May regulate the synthesis of sucrose and therefore play a major role as a limiting factor in the export of photoassimilates out of the leaf. Plays a role for sucrose availability that is essential for plant growth and fiber elongation. The sequence is that of Probable sucrose-phosphate synthase 4 (SPS4) from Oryza sativa subsp. japonica (Rice).